Reading from the N-terminus, the 366-residue chain is UDP-N-acetylglucosamine--N-acetylmuramyl-(pentapeptide) pyrophosphoryl-undecaprenol N-acetylglucosamine transferase (366 aa).

UDP-N-acetyl-alpha-D-glucosamine contacts are provided by residues 10 to 12 (TGG), Asn124, Arg166, Ser196, and Gln296.

The protein belongs to the glycosyltransferase 28 family. MurG subfamily.

It localises to the cell membrane. The enzyme catalyses di-trans,octa-cis-undecaprenyl diphospho-N-acetyl-alpha-D-muramoyl-L-alanyl-D-glutamyl-meso-2,6-diaminopimeloyl-D-alanyl-D-alanine + UDP-N-acetyl-alpha-D-glucosamine = di-trans,octa-cis-undecaprenyl diphospho-[N-acetyl-alpha-D-glucosaminyl-(1-&gt;4)]-N-acetyl-alpha-D-muramoyl-L-alanyl-D-glutamyl-meso-2,6-diaminopimeloyl-D-alanyl-D-alanine + UDP + H(+). It participates in cell wall biogenesis; peptidoglycan biosynthesis. In terms of biological role, cell wall formation. Catalyzes the transfer of a GlcNAc subunit on undecaprenyl-pyrophosphoryl-MurNAc-pentapeptide (lipid intermediate I) to form undecaprenyl-pyrophosphoryl-MurNAc-(pentapeptide)GlcNAc (lipid intermediate II). In Alkaliphilus oremlandii (strain OhILAs) (Clostridium oremlandii (strain OhILAs)), this protein is UDP-N-acetylglucosamine--N-acetylmuramyl-(pentapeptide) pyrophosphoryl-undecaprenol N-acetylglucosamine transferase.